The primary structure comprises 791 residues: GDH/6PGL endoplasmic bifunctional protein (791 aa).

The N-terminal stretch at 1–19 is a signal peptide; the sequence is MWNMLIVAMCLALLGCLQA. Gln20 is subject to Pyrrolidone carboxylic acid. The segment at 20–526 is hexose-6-phosphate dehydrogenase; that stretch reads QELQGHVSII…SGRLFFSQQQ (507 aa). Residues 32–39 and Tyr149 contribute to the NADP(+) site; that span reads GATGDLAK. Asn157 is a glycosylation site (N-linked (GlcNAc...) asparagine). Lys174 lines the NADP(+) pocket. Residues Lys174, 204-208, Glu243, and Asp262 each bind D-glucose 6-phosphate; that span reads HYLGK. N6-succinyllysine is present on Lys208. The Proton acceptor role is filled by His267. Asn282 is a glycosylation site (N-linked (GlcNAc...) asparagine). 2 residues coordinate D-glucose 6-phosphate: Lys360 and Arg365. Position 370 (Arg370) interacts with NADP(+). Positions 527–540 are linker; that stretch reads PEQLVPGPGPAPMP. Residues 541–791 form a 6-phosphogluconolactonase region; the sequence is SDFQVLRAKY…WYMDYDAFLG (251 aa). Trp617 contributes to the NADP(+) binding site. Asn683 carries N-linked (GlcNAc...) asparagine glycosylation.

The protein in the N-terminal section; belongs to the glucose-6-phosphate dehydrogenase family. This sequence in the C-terminal section; belongs to the glucosamine/galactosamine-6-phosphate isomerase family. 6-phosphogluconolactonase subfamily. In terms of assembly, homodimer. As to expression, present in most tissues examined, strongest in liver.

The protein resides in the endoplasmic reticulum lumen. It carries out the reaction D-glucose 6-phosphate + NADP(+) = 6-phospho-D-glucono-1,5-lactone + NADPH + H(+). The catalysed reaction is D-glucose 6-phosphate + NAD(+) = 6-phospho-D-glucono-1,5-lactone + NADH + H(+). The enzyme catalyses 6-phospho-D-glucono-1,5-lactone + H2O = 6-phospho-D-gluconate + H(+). It catalyses the reaction 2-deoxy-D-glucose 6-phosphate + NAD(+) = 2-deoxy-6-phospho-D-glucono-1,5-lactone + NADH + H(+). It carries out the reaction 2-deoxy-D-glucose 6-phosphate + NADP(+) = 2-deoxy-6-phospho-D-glucono-1,5-lactone + NADPH + H(+). The catalysed reaction is D-galactose 6-phosphate + NADP(+) = 6-phospho-D-galactono-1,5-lactone + NADPH + H(+). The enzyme catalyses D-galactose 6-phosphate + NAD(+) = 6-phospho-D-galactono-1,5-lactone + NADH + H(+). It catalyses the reaction D-glucosamine 6-phosphate + NADP(+) = 2-amino-2-deoxy-6-phospho-D-glucono-1,5-lactone + NADPH + 2 H(+). It carries out the reaction D-glucose + NAD(+) = D-glucono-1,5-lactone + NADH + H(+). The catalysed reaction is D-glucose + NADP(+) = D-glucono-1,5-lactone + NADPH + H(+). The enzyme catalyses D-glucose 6-sulfate + NADP(+) = 6-sulfo-D-glucono-1,5-lactone + NADPH + H(+). It functions in the pathway carbohydrate degradation; pentose phosphate pathway; D-ribulose 5-phosphate from D-glucose 6-phosphate (oxidative stage): step 1/3. Its pathway is carbohydrate degradation; pentose phosphate pathway; D-ribulose 5-phosphate from D-glucose 6-phosphate (oxidative stage): step 2/3. It participates in carbohydrate degradation; pentose phosphate pathway; D-ribulose 5-phosphate from D-glucose 6-phosphate (oxidative stage). Bifunctional enzyme localized in the lumen of the endoplasmic reticulum that catalyzes the first two steps of the oxidative branch of the pentose phosphate pathway/shunt, an alternative to glycolysis and a major source of reducing power and metabolic intermediates for biosynthetic processes. Has a hexose-6-phosphate dehydrogenase activity, with broad substrate specificity compared to glucose-6-phosphate 1-dehydrogenase/G6PD, and catalyzes the first step of the pentose phosphate pathway. In addition, acts as a 6-phosphogluconolactonase and catalyzes the second step of the pentose phosphate pathway. May have a dehydrogenase activity for alternative substrates including glucosamine 6-phosphate and glucose 6-sulfate. The main function of this enzyme is to provide reducing equivalents such as NADPH to maintain the adequate levels of reductive cofactors in the oxidizing environment of the endoplasmic reticulum. By producing NADPH that is needed by reductases of the lumen of the endoplasmic reticulum like corticosteroid 11-beta-dehydrogenase isozyme 1/HSD11B1, indirectly regulates their activity. This is GDH/6PGL endoplasmic bifunctional protein from Homo sapiens (Human).